A 326-amino-acid chain; its full sequence is uncharacterized protein (326 aa).

28-35 (GPINSGKT) provides a ligand contact to ATP.

Belongs to the archaeal ATPase family.

This is an uncharacterized protein from Pyrococcus abyssi (strain GE5 / Orsay).